Here is a 376-residue protein sequence, read N- to C-terminus: tRNA-specific 2-thiouridylase MnmA (376 aa).

ATP-binding positions include 16 to 23 (AMSGGVDS) and leucine 42. Cysteine 111 functions as the Nucleophile in the catalytic mechanism. Cysteines 111 and 210 form a disulfide. Glycine 135 serves as a coordination point for ATP. The segment at 158–160 (KDQ) is interaction with tRNA. Cysteine 210 acts as the Cysteine persulfide intermediate in catalysis.

This sequence belongs to the MnmA/TRMU family.

Its subcellular location is the cytoplasm. The enzyme catalyses S-sulfanyl-L-cysteinyl-[protein] + uridine(34) in tRNA + AH2 + ATP = 2-thiouridine(34) in tRNA + L-cysteinyl-[protein] + A + AMP + diphosphate + H(+). Functionally, catalyzes the 2-thiolation of uridine at the wobble position (U34) of tRNA, leading to the formation of s(2)U34. This is tRNA-specific 2-thiouridylase MnmA from Streptomyces coelicolor (strain ATCC BAA-471 / A3(2) / M145).